Consider the following 155-residue polypeptide: MDLRLLGIDNTPLFHTLHHMMEAAGEDSVNAPSKIYVRDAKAMAATPADVKEYPNSYVFVVDMPGLKSGDIKVQVEEDNVLLISGERKREEEKEGAKFIRMERRVGKFMRKFSLPENANTDAISAVCQDGVLTVTVQKLPPPEPKKPKTIEVKVA.

Residues 39 to 155 enclose the sHSP domain; it reads DAKAMAATPA…KPKTIEVKVA (117 aa).

Belongs to the small heat shock protein (HSP20) family.

Its subcellular location is the cytoplasm. The protein is 17.3 kDa class II heat shock protein of Solanum peruvianum (Peruvian tomato).